The primary structure comprises 1369 residues: MutS protein homolog 5 (1369 aa).

The disordered stretch occupies residues 138 to 190; that stretch reads IYEDGTTEEGTSEDTVPTWDSSLAYSTDETTAEKEEKEEDEDDDDEGLPAKLN. Residues 173–184 show a composition bias toward acidic residues; the sequence is EKEEDEDDDDEG. 639–646 is an ATP binding site; the sequence is GPNACGKS. Disordered regions lie at residues 880 to 915, 935 to 1135, 1153 to 1182, and 1248 to 1278; these read SMRN…SVLS, KKKK…RSSN, LKSQ…HSQN, and NFIF…SSIS. Basic and acidic residues predominate over residues 884–894; that stretch reads VSEEIEKERSE. Composition is skewed to polar residues over residues 895-915 and 941-950; these read ASTP…SVLS and TGSSMESSMS. Residues 954–967 are compositionally biased toward acidic residues; sequence FQEEDEGTEGEEDQ. The span at 991-1003 shows a compositional bias: polar residues; it reads QSINSRHSFSTRT. The segment covering 1024–1037 has biased composition (low complexity); sequence STSTSSPGPSASKS. A compositionally biased stretch (polar residues) spans 1049–1065; that stretch reads VKESQVLETPKQLSISS. The segment covering 1073-1084 has biased composition (basic and acidic residues); it reads SSEKDVISRVSE. 2 stretches are compositionally biased toward polar residues: residues 1111 to 1124 and 1153 to 1167; these read KNRS…QSAR and LKSQ…TPRS. Residues 1254–1263 are compositionally biased toward basic and acidic residues; sequence PEPRSSEKQR.

This sequence belongs to the DNA mismatch repair MutS family. As to quaternary structure, heterooligomer of him-14 and msh-5. Interacts with the brc-1-brd-1 heterodimer. Expressed in the germline.

The protein resides in the chromosome. In terms of biological role, crucial component in meiotic recombination, functioning at some point after the initiation step of recombination. Plays a role in promoting the crossover outcome of meiotic recombination events. Required for formation of normal meiotic crossover, and crossover and chiasmata generated by artificially made DNA breaks. Together with him-14 and zhp-3 plays a role in the activation of DNA damage-dependent apoptosis at the DNA damage checkpoint in pachytene cells. The chain is MutS protein homolog 5 from Caenorhabditis elegans.